The primary structure comprises 416 residues: Signal recognition particle receptor FtsY (416 aa).

The span at 1–10 (MFSFFRRKKK) shows a compositional bias: basic residues. The disordered stretch occupies residues 1 to 24 (MFSFFRRKKKQETPALEEAQVQET). GTP is bound by residues 224 to 231 (GINGAGKT), 304 to 308 (DTAGR), and 368 to 371 (TKLD).

The protein belongs to the GTP-binding SRP family. FtsY subfamily. As to quaternary structure, part of the signal recognition particle protein translocation system, which is composed of SRP and FtsY. SRP is a ribonucleoprotein composed of Ffh and a 4.5S RNA molecule. It depends on Mg(2+) as a cofactor.

It is found in the cell membrane. Its subcellular location is the cytoplasm. It catalyses the reaction GTP + H2O = GDP + phosphate + H(+). Functionally, involved in targeting and insertion of nascent membrane proteins into the cytoplasmic membrane. Acts as a receptor for the complex formed by the signal recognition particle (SRP) and the ribosome-nascent chain (RNC). Interaction with SRP-RNC leads to the transfer of the RNC complex to the Sec translocase for insertion into the membrane, the hydrolysis of GTP by both Ffh and FtsY, and the dissociation of the SRP-FtsY complex into the individual components. In Neisseria gonorrhoeae, this protein is Signal recognition particle receptor FtsY.